The following is a 156-amino-acid chain: Putative F-box protein R637 (156 aa).

Residues 4-51 (HISSLLNEDCVRHIMCFLTDKEKGKFCLTCRDLLYLIKDVKFNDPVNK) enclose the F-box domain.

This Acanthamoeba polyphaga mimivirus (APMV) protein is Putative F-box protein R637.